A 204-amino-acid chain; its full sequence is N-(5'-phosphoribosyl)anthranilate isomerase (204 aa).

This sequence belongs to the TrpF family.

It catalyses the reaction N-(5-phospho-beta-D-ribosyl)anthranilate = 1-(2-carboxyphenylamino)-1-deoxy-D-ribulose 5-phosphate. It functions in the pathway amino-acid biosynthesis; L-tryptophan biosynthesis; L-tryptophan from chorismate: step 3/5. This is N-(5'-phosphoribosyl)anthranilate isomerase from Bacillus cereus (strain AH820).